The chain runs to 781 residues: Dynamin-related protein dnm1 (781 aa).

Residues 23-328 (FLDLPSIVVV…LVSHIRERLP (306 aa)) form the Dynamin-type G domain. The segment at 33 to 40 (GSQSCGKS) is G1 motif. 33–40 (GSQSCGKS) lines the GTP pocket. The segment at 59 to 61 (VTR) is G2 motif. Positions 76-103 (KNNHDEESTSDNNSEETSAAGETGSLEG) are disordered. The segment at 170 to 173 (DLPG) is G3 motif. GTP-binding positions include 170-174 (DLPGL) and 239-242 (TKLD). The interval 239–242 (TKLD) is G4 motif. The tract at residues 269–272 (VNRS) is G5 motif. One can recognise a GED domain in the interval 694-781 (VDLIKELITS…QANKIISTVF (88 aa)).

The protein belongs to the TRAFAC class dynamin-like GTPase superfamily. Dynamin/Fzo/YdjA family.

It localises to the cytoplasm. Its subcellular location is the mitochondrion outer membrane. The enzyme catalyses GTP + H2O = GDP + phosphate + H(+). Microtubule-associated force-producing protein that mediates mitochondrial fission during interphasic growth and at cell division. Fission of mitochondria occurs in many cell types and constitutes an important step in mitochondria morphology, which is balanced between fusion and fission. With vps1, acts redundantly in peroxisome biogenesis, which is under cell cycle control. The polypeptide is Dynamin-related protein dnm1 (dnm1) (Schizosaccharomyces pombe (strain 972 / ATCC 24843) (Fission yeast)).